The sequence spans 356 residues: Heparan sulfate 2-O-sulfotransferase 1 (356 aa).

Residues 1–11 (MGLLRIMMPPK) lie on the Cytoplasmic side of the membrane. Residues 12-28 (LQLLAVVAFAVAMLFLE) form a helical; Signal-anchor for type II membrane protein membrane-spanning segment. A coiled-coil region spans residues 24–51 (MLFLENQIQKLEESRSKLERAIARHEVR). At 29-356 (NQIQKLEESR…FYEKIYPKSN (328 aa)) the chain is on the lumenal side. The adenosine 3',5'-bisphosphate site is built by Lys83, Thr84, Ala85, Ser86, Thr87, and Ser88. Asn108 and Asn127 each carry an N-linked (GlcNAc...) asparagine glycan. Catalysis depends on residues His140 and His142. Positions 164 and 172 each coordinate adenosine 3',5'-bisphosphate. 2 disulfide bridges follow: Cys201-Cys209 and Cys222-Cys228. Positions 279, 285, 290, and 293 each coordinate adenosine 3',5'-bisphosphate.

Belongs to the sulfotransferase 3 family. Homotrimer. Interacts with the C5-epimerase GLCE. Post-translationally, N-glycosylated.

Its subcellular location is the golgi apparatus membrane. Catalyzes the transfer of a sulfo group from 3'-phospho-5'-adenylyl sulfate (PAPS) to the 2-OH position of iduronic acid (IdoA) or glucuronic acid (GlcA) within the heparan sulfate (HS) chain and participates in HS biosynthesis. Required for metanephric development of kidney formation, suggesting that 2-O-sulfation within HS is essential for signaling between ureteric bud and metanephric mesenchyme. The sequence is that of Heparan sulfate 2-O-sulfotransferase 1 from Homo sapiens (Human).